We begin with the raw amino-acid sequence, 442 residues long: MSKTYHFIGIKGSGMSALALMLHQMGHKVQGSDVEKYYFTQRGLEQAGITILPFSEDNITPDMELIVGNAFRENNKEVAYALRHQIPFKRYHDFLGDFMKSFISFAVAGAHGKTSTTGLLSHVLKNITDTSYLIGDGTGRGSANAQYFVFESDEYERHFMPYHPEYSIITNIDFDHPDYFTGIADVRNAFNDYAKQVKKALFVYGEDDELKKIEAPAPIYYYGFEEGNDFIAYDITRTTNGSDFKVKHQGEVIGQFHVPAYGKHNILNATAVIANLFVAGIDTALVADHLKTFSGVKRRFTEKIINDTIIIDDFAHHPTEIVATIDAARQKYPSKEIVAIFQPHTFTRTIALLEDFACALNEADSVYLAQIYGSAREVDKGEVKVEDLAAKIIKPSQVVTVENVSPLLDHDNAVYVFMGAGDIQLYEHSFEELLANLTKNNQ.

109-115 (GAHGKTS) contacts ATP.

This sequence belongs to the MurCDEF family.

It is found in the cytoplasm. It carries out the reaction UDP-N-acetyl-alpha-D-muramate + L-alanine + ATP = UDP-N-acetyl-alpha-D-muramoyl-L-alanine + ADP + phosphate + H(+). It participates in cell wall biogenesis; peptidoglycan biosynthesis. Cell wall formation. The chain is UDP-N-acetylmuramate--L-alanine ligase from Streptococcus pyogenes serotype M28 (strain MGAS6180).